The chain runs to 246 residues: Ribonuclease 3 (246 aa).

The 126-residue stretch at 20 to 145 folds into the RNase III domain; sequence FSKLEKILGF…FVGAIYLDRG (126 aa). Glutamate 62 lines the Mg(2+) pocket. Residue aspartate 66 is part of the active site. Mg(2+)-binding residues include asparagine 131 and glutamate 134. Residue glutamate 134 is part of the active site. In terms of domain architecture, DRBM spans 173–241; the sequence is SYKSLLIEWC…SKRGYFVFQS (69 aa).

This sequence belongs to the ribonuclease III family. Homodimer. Requires Mg(2+) as cofactor.

The protein resides in the cytoplasm. It carries out the reaction Endonucleolytic cleavage to 5'-phosphomonoester.. Its function is as follows. Digests double-stranded RNA. Involved in the processing of primary rRNA transcript to yield the immediate precursors to the large and small rRNAs (23S and 16S). Processes some mRNAs, and tRNAs when they are encoded in the rRNA operon. Processes pre-crRNA and tracrRNA of type II CRISPR loci if present in the organism. This chain is Ribonuclease 3, found in Flavobacterium psychrophilum (strain ATCC 49511 / DSM 21280 / CIP 103535 / JIP02/86).